A 61-amino-acid polypeptide reads, in one-letter code: Putative MSV199 domain-containing protein 200R (61 aa).

In Invertebrate iridescent virus 6 (IIV-6), this protein is Putative MSV199 domain-containing protein 200R.